The following is a 444-amino-acid chain: MAYGGPSMNPPALSGAVPGSANLKQVKLERESELRIEVSEEPLRLRVVNGTAEIFGSELPPEIWRTFPPRMKFAVFTWYGATIEMDGVTETDYTADETPMVSYINVHAILDARRRFAKASTSNDPESSQGPRVIVVGPTDSGKSTLTKMLLSWAAKQGWRPTFVDLDVGQGSITIPGSIAAAPIEMPLDPVEGFPLDMALVYYYGHASPNMNVELYKALVKELAQVLEKQFVGNPESRAAGMVINTMGWIEGIGYELLLHAIDTFNASVVLVLGQEKLFSRLKDVLRSKSNVDVVKLHKSGGVVARVKEVRKRSRNFKIQEYFYGLSKELSPYANTSSFSDLQVFRIGGGPQAPKSALPAGSTSVSNPLRVTPVNIDDRDLLHSVLAVSYAEEPDQIISSNVSGFVYVTEVNVQKKKITYLAPSPGTLPSKLLVAGSLAWLESV.

Residues Glu33, Lys72, and 140–145 contribute to the ATP site; that span reads DSGKST.

This sequence belongs to the Clp1 family. Clp1 subfamily. Interacts with PCFS4 and SYM5. Forms a complex with cleavage and polyadenylation specificity factor (CPSF) subunits CPSF30, CPSF100, PCFS1, PCFS4, PCFS5, CPSF160 and FY.

The protein localises to the nucleus. Functionally, required for endonucleolytic cleavage during polyadenylation-dependent pre-mRNA 3'-end formation. Functions in gametophyte, embryo and postembryotic development. This chain is Protein CLP1 homolog (CLPS3), found in Arabidopsis thaliana (Mouse-ear cress).